Here is a 1005-residue protein sequence, read N- to C-terminus: Ephrin type-A receptor 5 (1005 aa).

The tract at residues 1–24 (MRGSGPRGAGRRRTQGRGGGGDTP) is disordered. The signal sequence occupies residues 1-26 (MRGSGPRGAGRRRTQGRGGGGDTPRV). The Extracellular segment spans residues 27 to 575 (PASLAGCYSA…GASNDQSQIP (549 aa)). Residues 62–240 (EVNLLDSRTV…YYKKCPSVVR (179 aa)) enclose the Eph LBD domain. Residues Asn266, Asn301, Asn371, Asn425, Asn438, and Asn463 are each glycosylated (N-linked (GlcNAc...) asparagine). 2 Fibronectin type-III domains span residues 359-469 (PPSA…TNQA) and 470-564 (APSP…TTPV). Residues 576-596 (IIGVSVTVGVILLAVMIGFLL) traverse the membrane as a helical segment. Topologically, residues 597 to 1005 (SGSCCECGCG…MDAVAQVTLE (409 aa)) are cytoplasmic. Tyr652 and Tyr658 each carry phosphotyrosine; by autocatalysis. The 262-residue stretch at 677-938 (ITIERVIGAG…DIVNMLDKLI (262 aa)) folds into the Protein kinase domain. ATP-binding positions include 683-691 (IGAGEFGEV) and Lys709. The active-site Proton acceptor is Asp802. Phosphotyrosine; by autocatalysis occurs at positions 835 and 984. The region spanning 967 to 1005 (GAYRSVGEWLEATKMGRYTEIFMENGYSSMDAVAQVTLE) is the SAM domain.

It belongs to the protein kinase superfamily. Tyr protein kinase family. Ephrin receptor subfamily. In terms of assembly, heterotetramer upon binding of the ligand. The heterotetramer is composed of an ephrin dimer and a receptor dimer. Oligomerization is probably required to induce biological responses. Interacts (via SAM domain) with SAMD5 (via SAM domain). Post-translationally, phosphorylated. Phosphorylation is stimulated by the ligand EFNA5. Dephosphorylation upon stimulation by glucose, inhibits EPHA5 forward signaling and results in insulin secretion. Almost exclusively expressed in the nervous system. Predominantly expressed in neurons.

It is found in the cell membrane. Its subcellular location is the cell projection. The protein localises to the axon. It localises to the dendrite. It carries out the reaction L-tyrosyl-[protein] + ATP = O-phospho-L-tyrosyl-[protein] + ADP + H(+). Its function is as follows. Receptor tyrosine kinase which binds promiscuously GPI-anchored ephrin-A family ligands residing on adjacent cells, leading to contact-dependent bidirectional signaling into neighboring cells. The signaling pathway downstream of the receptor is referred to as forward signaling while the signaling pathway downstream of the ephrin ligand is referred to as reverse signaling. Among GPI-anchored ephrin-A ligands, EFNA5 most probably constitutes the cognate/functional ligand for EPHA5. Functions as an axon guidance molecule during development and may be involved in the development of the retinotectal, entorhino-hippocampal and hippocamposeptal pathways. Together with EFNA5 plays also a role in synaptic plasticity in adult brain through regulation of synaptogenesis. In addition to its function in the nervous system, the interaction of EPHA5 with EFNA5 mediates communication between pancreatic islet cells to regulate glucose-stimulated insulin secretion. The chain is Ephrin type-A receptor 5 (Epha5) from Rattus norvegicus (Rat).